Here is a 165-residue protein sequence, read N- to C-terminus: Cyclic pyranopterin monophosphate synthase (165 aa).

Substrate is bound by residues 78–80 (LCH) and 116–117 (ME). The active site involves aspartate 131.

This sequence belongs to the MoaC family. In terms of assembly, homohexamer; trimer of dimers.

It carries out the reaction (8S)-3',8-cyclo-7,8-dihydroguanosine 5'-triphosphate = cyclic pyranopterin phosphate + diphosphate. Its pathway is cofactor biosynthesis; molybdopterin biosynthesis. In terms of biological role, catalyzes the conversion of (8S)-3',8-cyclo-7,8-dihydroguanosine 5'-triphosphate to cyclic pyranopterin monophosphate (cPMP). The polypeptide is Cyclic pyranopterin monophosphate synthase (Sinorhizobium fredii (strain NBRC 101917 / NGR234)).